Reading from the N-terminus, the 228-residue chain is Lipoprotein-releasing system ATP-binding protein LolD (228 aa).

Positions 6–225 (LEAKDVYKHF…ILHMQDGLWV (220 aa)) constitute an ABC transporter domain. 42–49 (GASGSGKS) lines the ATP pocket.

The protein belongs to the ABC transporter superfamily. Lipoprotein translocase (TC 3.A.1.125) family. The complex is composed of two ATP-binding proteins (LolD) and two transmembrane proteins (LolC and LolE).

It is found in the cell inner membrane. Functionally, part of the ABC transporter complex LolCDE involved in the translocation of mature outer membrane-directed lipoproteins, from the inner membrane to the periplasmic chaperone, LolA. Responsible for the formation of the LolA-lipoprotein complex in an ATP-dependent manner. The sequence is that of Lipoprotein-releasing system ATP-binding protein LolD from Acinetobacter baylyi (strain ATCC 33305 / BD413 / ADP1).